We begin with the raw amino-acid sequence, 474 residues long: Bifunctional protein GlmU (474 aa).

Residues 1-232 form a pyrophosphorylase region; it reads MSALDVIIMA…ALQVAGVNSP (232 aa). UDP-N-acetyl-alpha-D-glucosamine-binding positions include Lys23, Gln78, 83–84, 105–107, Gly142, Glu157, and Asn230; these read GT and SGD. Asp107 is a binding site for Mg(2+). Asn230 is a binding site for Mg(2+). The interval 233–253 is linker; sequence LQLAELERAHQLAQARALMEQ. The segment at 254–474 is N-acetyltransferase; it reads GVRLADPARF…WQRPAKLPKA (221 aa). UDP-N-acetyl-alpha-D-glucosamine-binding residues include Arg349 and Lys367. His379 (proton acceptor) is an active-site residue. Residues Tyr382 and Asn393 each coordinate UDP-N-acetyl-alpha-D-glucosamine. Acetyl-CoA contacts are provided by residues Ala396, 402 to 403, Ser421, Gly439, and Arg456; that span reads NY. The tract at residues 454 to 474 is disordered; that stretch reads VARGKQVTKENWQRPAKLPKA.

It in the N-terminal section; belongs to the N-acetylglucosamine-1-phosphate uridyltransferase family. This sequence in the C-terminal section; belongs to the transferase hexapeptide repeat family. In terms of assembly, homotrimer. Mg(2+) is required as a cofactor.

Its subcellular location is the cytoplasm. It carries out the reaction alpha-D-glucosamine 1-phosphate + acetyl-CoA = N-acetyl-alpha-D-glucosamine 1-phosphate + CoA + H(+). The catalysed reaction is N-acetyl-alpha-D-glucosamine 1-phosphate + UTP + H(+) = UDP-N-acetyl-alpha-D-glucosamine + diphosphate. It functions in the pathway nucleotide-sugar biosynthesis; UDP-N-acetyl-alpha-D-glucosamine biosynthesis; N-acetyl-alpha-D-glucosamine 1-phosphate from alpha-D-glucosamine 6-phosphate (route II): step 2/2. It participates in nucleotide-sugar biosynthesis; UDP-N-acetyl-alpha-D-glucosamine biosynthesis; UDP-N-acetyl-alpha-D-glucosamine from N-acetyl-alpha-D-glucosamine 1-phosphate: step 1/1. Its pathway is bacterial outer membrane biogenesis; LPS lipid A biosynthesis. Functionally, catalyzes the last two sequential reactions in the de novo biosynthetic pathway for UDP-N-acetylglucosamine (UDP-GlcNAc). The C-terminal domain catalyzes the transfer of acetyl group from acetyl coenzyme A to glucosamine-1-phosphate (GlcN-1-P) to produce N-acetylglucosamine-1-phosphate (GlcNAc-1-P), which is converted into UDP-GlcNAc by the transfer of uridine 5-monophosphate (from uridine 5-triphosphate), a reaction catalyzed by the N-terminal domain. The sequence is that of Bifunctional protein GlmU from Paracidovorax citrulli (strain AAC00-1) (Acidovorax citrulli).